The chain runs to 427 residues: Glucose-6-phosphate isomerase (427 aa).

Glutamate 277 serves as the catalytic Proton donor. Residues histidine 298 and lysine 414 contribute to the active site.

The protein belongs to the GPI family.

The protein resides in the cytoplasm. It catalyses the reaction alpha-D-glucose 6-phosphate = beta-D-fructose 6-phosphate. The protein operates within carbohydrate biosynthesis; gluconeogenesis. It functions in the pathway carbohydrate degradation; glycolysis; D-glyceraldehyde 3-phosphate and glycerone phosphate from D-glucose: step 2/4. Functionally, catalyzes the reversible isomerization of glucose-6-phosphate to fructose-6-phosphate. The polypeptide is Glucose-6-phosphate isomerase (Mycoplasma capricolum subsp. capricolum (strain California kid / ATCC 27343 / NCTC 10154)).